The primary structure comprises 78 residues: Large ribosomal subunit protein bL28 (78 aa).

The tract at residues 1-23 (MSRKCQITGKKANNAMAVSHSHR) is disordered.

The protein belongs to the bacterial ribosomal protein bL28 family.

This Picosynechococcus sp. (strain ATCC 27264 / PCC 7002 / PR-6) (Agmenellum quadruplicatum) protein is Large ribosomal subunit protein bL28.